Here is a 60-residue protein sequence, read N- to C-terminus: UPF0337 protein SSP1134 (60 aa).

The disordered stretch occupies residues Met1 to Lys41. Basic and acidic residues predominate over residues Asp23 to Lys41.

Belongs to the UPF0337 (CsbD) family.

In Staphylococcus saprophyticus subsp. saprophyticus (strain ATCC 15305 / DSM 20229 / NCIMB 8711 / NCTC 7292 / S-41), this protein is UPF0337 protein SSP1134.